A 354-amino-acid chain; its full sequence is Chorismate synthase (354 aa).

Arginine 46 is a binding site for NADP(+). FMN is bound by residues 123–125 (RSS), 239–240 (NA), glycine 284, 299–303 (KPVAT), and arginine 325.

Belongs to the chorismate synthase family. In terms of assembly, homotetramer. FMNH2 serves as cofactor.

The enzyme catalyses 5-O-(1-carboxyvinyl)-3-phosphoshikimate = chorismate + phosphate. Its pathway is metabolic intermediate biosynthesis; chorismate biosynthesis; chorismate from D-erythrose 4-phosphate and phosphoenolpyruvate: step 7/7. In terms of biological role, catalyzes the anti-1,4-elimination of the C-3 phosphate and the C-6 proR hydrogen from 5-enolpyruvylshikimate-3-phosphate (EPSP) to yield chorismate, which is the branch point compound that serves as the starting substrate for the three terminal pathways of aromatic amino acid biosynthesis. This reaction introduces a second double bond into the aromatic ring system. The sequence is that of Chorismate synthase from Azobacteroides pseudotrichonymphae genomovar. CFP2.